The primary structure comprises 306 residues: UDP-3-O-acyl-N-acetylglucosamine deacetylase (306 aa).

The Zn(2+) site is built by H79, H238, and D242. The active-site Proton donor is the H265.

The protein belongs to the LpxC family. Zn(2+) is required as a cofactor.

It catalyses the reaction a UDP-3-O-[(3R)-3-hydroxyacyl]-N-acetyl-alpha-D-glucosamine + H2O = a UDP-3-O-[(3R)-3-hydroxyacyl]-alpha-D-glucosamine + acetate. It participates in glycolipid biosynthesis; lipid IV(A) biosynthesis; lipid IV(A) from (3R)-3-hydroxytetradecanoyl-[acyl-carrier-protein] and UDP-N-acetyl-alpha-D-glucosamine: step 2/6. Functionally, catalyzes the hydrolysis of UDP-3-O-myristoyl-N-acetylglucosamine to form UDP-3-O-myristoylglucosamine and acetate, the committed step in lipid A biosynthesis. In Idiomarina loihiensis (strain ATCC BAA-735 / DSM 15497 / L2-TR), this protein is UDP-3-O-acyl-N-acetylglucosamine deacetylase.